Here is a 223-residue protein sequence, read N- to C-terminus: UPF0441 protein YgiB (223 aa).

Over residues 178–195 (TVPKTAMAPKPATTTTVT) the composition is skewed to low complexity. Residues 178 to 223 (TVPKTAMAPKPATTTTVTRGGFGESVAKQSTMQRSAAGTSTRSMGG) form a disordered region. Positions 204 to 223 (AKQSTMQRSAAGTSTRSMGG) are enriched in polar residues.

This sequence belongs to the UPF0441 family.

The polypeptide is UPF0441 protein YgiB (Salmonella paratyphi A (strain ATCC 9150 / SARB42)).